The primary structure comprises 262 residues: Phosphonates import ATP-binding protein PhnC (262 aa).

Positions 5–253 constitute an ABC transporter domain; the sequence is IRVEKLAKTF…RFDHLYRSIN (249 aa). Residue 37–44 participates in ATP binding; it reads GPSGSGKS.

Belongs to the ABC transporter superfamily. Phosphonates importer (TC 3.A.1.9.1) family. In terms of assembly, the complex is composed of two ATP-binding proteins (PhnC), two transmembrane proteins (PhnE) and a solute-binding protein (PhnD).

The protein resides in the cell inner membrane. It catalyses the reaction phosphonate(out) + ATP + H2O = phosphonate(in) + ADP + phosphate + H(+). Part of the ABC transporter complex PhnCDE involved in phosphonates, phosphate esters, phosphite and phosphate import. Responsible for energy coupling to the transport system. This chain is Phosphonates import ATP-binding protein PhnC, found in Escherichia coli (strain K12).